The primary structure comprises 1014 residues: 2-oxoglutarate dehydrogenase, mitochondrial (1014 aa).

A mitochondrion-targeting transit peptide spans 1-30; that stretch reads MLRFVSSQTCRYSSRGLLKTSLLKNASTVK. Residues R306, D406, N439, and I441 each coordinate thiamine diphosphate. Positions 406, 439, and 441 each coordinate Mg(2+).

This sequence belongs to the alpha-ketoglutarate dehydrogenase family. In terms of assembly, component of the 2-oxoglutarate dehydrogenase complex (OGDC), also called alpha-ketoglutarate dehydrogenase (KGDH) complex. The copmplex is composed of the catalytic subunits OGDH (2-oxoglutarate dehydrogenase KGD1; also called E1 subunit), DLST (dihydrolipoamide succinyltransferase KGD2; also called E2 subunit) and DLD (dihydrolipoamide dehydrogenase LPD1; also called E3 subunit), and the assembly factor KGD4. Requires thiamine diphosphate as cofactor. It depends on Mg(2+) as a cofactor.

Its subcellular location is the mitochondrion. It is found in the mitochondrion matrix. It localises to the mitochondrion nucleoid. It carries out the reaction N(6)-[(R)-lipoyl]-L-lysyl-[protein] + 2-oxoglutarate + H(+) = N(6)-[(R)-S(8)-succinyldihydrolipoyl]-L-lysyl-[protein] + CO2. With respect to regulation, catabolite repressed. The 2-oxoglutarate dehydrogenase complex catalyzes the overall conversion of 2-oxoglutarate to succinyl-CoA and CO(2). It contains multiple copies of three enzymatic components: 2-oxoglutarate dehydrogenase (E1), dihydrolipoamide succinyltransferase (E2) and lipoamide dehydrogenase (E3). The polypeptide is 2-oxoglutarate dehydrogenase, mitochondrial (KGD1) (Saccharomyces cerevisiae (strain ATCC 204508 / S288c) (Baker's yeast)).